We begin with the raw amino-acid sequence, 299 residues long: Small ribosomal subunit protein uS2 (299 aa).

The segment at 210 to 299 (AEKEEQTQVV…GAATDNSWAS (90 aa)) is disordered. The segment covering 275-285 (WASTGTATVGP) has biased composition (polar residues).

This sequence belongs to the universal ribosomal protein uS2 family. In terms of assembly, component of the small ribosomal subunit. Mature ribosomes consist of a small (40S) and a large (60S) subunit. The 40S subunit contains about 33 different proteins and 1 molecule of RNA (18S). The 60S subunit contains about 49 different proteins and 3 molecules of RNA (28S, 5.8S and 5S). Interacts with ribosomal protein S21.

It localises to the cytoplasm. Required for the assembly and/or stability of the 40S ribosomal subunit. Required for the processing of the 20S rRNA-precursor to mature 18S rRNA in a late step of the maturation of 40S ribosomal subunits. The chain is Small ribosomal subunit protein uS2 from Ornithodoros parkeri (Soft tick).